Consider the following 483-residue polypeptide: Linamarin synthase 1 (483 aa).

Catalysis depends on H22, which acts as the Proton acceptor. An an anthocyanidin-binding site is contributed by H22. D124 acts as the Charge relay in catalysis. Positions 146, 360, 362, 377, 380, 381, 382, and 385 each coordinate UDP-alpha-D-glucose. A400 serves as a coordination point for an anthocyanidin. Residues E401 and Q402 each coordinate UDP-alpha-D-glucose.

This sequence belongs to the UDP-glycosyltransferase family. In terms of tissue distribution, expressed in the cortex, xylem and phloem parenchyma, and in specific cells in the endodermis of the petiole of the first unfolded leaf.

The enzyme catalyses 2-hydroxy-2-methylpropanenitrile + UDP-alpha-D-glucose = linamarin + UDP + H(+). In terms of biological role, UDP-glucosyltransferase catalyzing in planta synthesis of cyanogenic glucosides. Able to glucosylate acetone cyanohydrin and 2-hydroxy-2-methylbutyronitrile, forming linamarin and lotaustralin. Also accepts, to some extent, a wide range of potential acceptor substrates, including simple alcohols, flavonoids, isoflavonoids and other hydroxynitriles such as p-hydroxymandelonitrile, mandelonitrile, (E)-4-hydroxy-2-methylbut-2-enenitrile and (E)- 2-(hydroxymethyl)but-2-enenitrile. The sequence is that of Linamarin synthase 1 from Manihot esculenta (Cassava).